The following is a 196-amino-acid chain: Segregation and condensation protein B (196 aa).

The protein belongs to the ScpB family. As to quaternary structure, homodimer. Homodimerization may be required to stabilize the binding of ScpA to the Smc head domains. Component of a cohesin-like complex composed of ScpA, ScpB and the Smc homodimer, in which ScpA and ScpB bind to the head domain of Smc. The presence of the three proteins is required for the association of the complex with DNA.

It localises to the cytoplasm. Functionally, participates in chromosomal partition during cell division. May act via the formation of a condensin-like complex containing Smc and ScpA that pull DNA away from mid-cell into both cell halves. The chain is Segregation and condensation protein B from Lactobacillus johnsonii (strain CNCM I-12250 / La1 / NCC 533).